Here is a 161-residue protein sequence, read N- to C-terminus: Urease accessory protein UreE (161 aa).

Positions 138–161 (RGAYHAHGGHSHDHGQGHHHHDHG) are disordered.

It belongs to the UreE family.

Its subcellular location is the cytoplasm. Involved in urease metallocenter assembly. Binds nickel. Probably functions as a nickel donor during metallocenter assembly. The sequence is that of Urease accessory protein UreE from Agrobacterium fabrum (strain C58 / ATCC 33970) (Agrobacterium tumefaciens (strain C58)).